The chain runs to 191 residues: Cell division protein SepF (191 aa).

The span at 153-178 (FPEEASPSNVSSKKTSQYKFETNTTP) shows a compositional bias: polar residues. The disordered stretch occupies residues 153-191 (FPEEASPSNVSSKKTSQYKFETNTTPEPAWGESKLSAYN).

This sequence belongs to the SepF family. Homodimer. Interacts with FtsZ.

The protein resides in the cytoplasm. In terms of biological role, cell division protein that is part of the divisome complex and is recruited early to the Z-ring. Probably stimulates Z-ring formation, perhaps through the cross-linking of FtsZ protofilaments. Its function overlaps with FtsA. The chain is Cell division protein SepF from Prochlorococcus marinus subsp. pastoris (strain CCMP1986 / NIES-2087 / MED4).